Reading from the N-terminus, the 265-residue chain is Ribosomal RNA small subunit methyltransferase A (265 aa).

The S-adenosyl-L-methionine site is built by asparagine 13, leucine 15, glycine 39, glutamate 59, aspartate 87, and asparagine 108.

Belongs to the class I-like SAM-binding methyltransferase superfamily. rRNA adenine N(6)-methyltransferase family. RsmA subfamily.

The protein resides in the cytoplasm. It carries out the reaction adenosine(1518)/adenosine(1519) in 16S rRNA + 4 S-adenosyl-L-methionine = N(6)-dimethyladenosine(1518)/N(6)-dimethyladenosine(1519) in 16S rRNA + 4 S-adenosyl-L-homocysteine + 4 H(+). Functionally, specifically dimethylates two adjacent adenosines (A1518 and A1519) in the loop of a conserved hairpin near the 3'-end of 16S rRNA in the 30S particle. May play a critical role in biogenesis of 30S subunits. The chain is Ribosomal RNA small subunit methyltransferase A from Aliarcobacter butzleri (strain RM4018) (Arcobacter butzleri).